The sequence spans 253 residues: Ubiquinone biosynthesis O-methyltransferase (253 aa).

Residues Arg-47, Gly-78, Asp-99, and Met-141 each contribute to the S-adenosyl-L-methionine site.

The protein belongs to the methyltransferase superfamily. UbiG/COQ3 family.

It catalyses the reaction a 3-demethylubiquinol + S-adenosyl-L-methionine = a ubiquinol + S-adenosyl-L-homocysteine + H(+). It carries out the reaction a 3-(all-trans-polyprenyl)benzene-1,2-diol + S-adenosyl-L-methionine = a 2-methoxy-6-(all-trans-polyprenyl)phenol + S-adenosyl-L-homocysteine + H(+). Its pathway is cofactor biosynthesis; ubiquinone biosynthesis. In terms of biological role, O-methyltransferase that catalyzes the 2 O-methylation steps in the ubiquinone biosynthetic pathway. This chain is Ubiquinone biosynthesis O-methyltransferase, found in Rhodopseudomonas palustris (strain ATCC BAA-98 / CGA009).